Reading from the N-terminus, the 453-residue chain is Glutamyl-tRNA(Gln) amidotransferase subunit A (453 aa).

Catalysis depends on charge relay system residues lysine 56 and serine 131. Serine 155 acts as the Acyl-ester intermediate in catalysis.

The protein belongs to the amidase family. GatA subfamily. As to quaternary structure, heterotrimer of A, B and C subunits.

The catalysed reaction is L-glutamyl-tRNA(Gln) + L-glutamine + ATP + H2O = L-glutaminyl-tRNA(Gln) + L-glutamate + ADP + phosphate + H(+). In terms of biological role, allows the formation of correctly charged Gln-tRNA(Gln) through the transamidation of misacylated Glu-tRNA(Gln) in organisms which lack glutaminyl-tRNA synthetase. The reaction takes place in the presence of glutamine and ATP through an activated gamma-phospho-Glu-tRNA(Gln). The sequence is that of Glutamyl-tRNA(Gln) amidotransferase subunit A from Campylobacter jejuni subsp. jejuni serotype O:6 (strain 81116 / NCTC 11828).